The chain runs to 999 residues: MTNFRLNVLAYSVMLGLTASVAYAEPTNQPTNQPTNQPTNQPTNQPTNQNSNASEQLEQINVLGSDNNNDNTPPKIAETVKTASQLKRQQVQDSRDLVRYETGVTVVEAGRFGSSGYAIRGVDENRVAITVDGLHQAETLSSQGFKELFEGYGNFNNTRNSVEIETLKVAKIAKGADSVKVGSGSLGGAVLFETKDARDFLTEKDWHIGYKAGYSTADNQGLNAVTLAGRYQMFDALIMHSKRHGHELENYDYKNGRDIQGKEREKADPYTITKESTLVKFSFSPTENHRFTVASDTYLQHSRGHDFSYNLVKTTYINKDEEELRHTNDLTKRKNVSFTYENYTVTPFWDTLKLSYSQQRITTRARTEDYCDGNEKCDSYKNPLGLQLKEGKVVDRNGDPVELKLVEDEQGQKRHQVVDKYNNPFSVASGTNNDAFVGKQLSPSEFWLDCSIFNCDKPVRVYKYQYSNQEPESKEVELNRTMEINGKKFATYESNNYRDRYHMILPNSKGYLPLDYKERDLNTKTKQINLDLTKAFTLFEIENELSYGGVYAKTTKEMVNKAGYYGRNPTWWAERTLGKSLLNGLRTCKEDSSYNGLLCPRHEPKTSFLIPVETTTKSLYFADNIKLHNMLSVDLGYRYDDIKYQPEYIPGVTPKIADDMVRELFVPLPPANGKDWQGNPVYTPEQIRKNAEENIAYIAQEKRFKKHSYSLGATFDPLNFLRVQVKYSKGFRTPTSDELYFTFKHPDFTILPNPNMKPEEAKNQEIALTFHHDWGFFSTNVFQTKYRQFIDLAYLGSRNLSNSVGGQAQARDFQVYQNVNVDRAKVKGVEINSRLNIGYFFEKLDGFNVSYKFTYQRGRLDGNRPMNAIQPKTSVIGLGYDHKEQRFGADLYVTHVSAKKAKDTYNMFYKEQGYKDSAVRWRSDDYTLVDFVTYIKPVKNVTLQFGVYNLTDRKYLTWESARSIKPFGTSNLINQGTGAGINRFYSPGRNYKLSAEITF.

The signal sequence occupies residues 1–24 (MTNFRLNVLAYSVMLGLTASVAYA). Residues 25–52 (EPTNQPTNQPTNQPTNQPTNQPTNQNSN) are disordered. 6 repeat units span residues 26–29 (PTNQ), 30–33 (PTNQ), 34–37 (PTNQ), 38–41 (PTNQ), 42–45 (PTNQ), and 46–49 (PTNQ). Positions 26–49 (PTNQPTNQPTNQPTNQPTNQPTNQ) are 6 X 4 AA tandem repeats of P-T-N-Q. The span at 26-50 (PTNQPTNQPTNQPTNQPTNQPTNQN) shows a compositional bias: low complexity. The short motif at 58–65 (EQINVLGS) is the TonB box element. Residues 68–195 (NNDNTPPKIA…LGGAVLFETK (128 aa)) form the TBDR plug domain. A TBDR beta-barrel domain is found at 203 to 999 (EKDWHIGYKA…NYKLSAEITF (797 aa)). Residues 982-999 (NRFYSPGRNYKLSAEITF) carry the TonB C-terminal box motif.

The protein belongs to the TonB-dependent receptor family. Hemoglobin/haptoglobin binding protein subfamily.

Its subcellular location is the cell outer membrane. In terms of biological role, acts as a receptor for hemoglobin or the hemoglobin/haptoglobin complex of the human host and is required for heme uptake. This is Probable hemoglobin and hemoglobin-haptoglobin-binding protein 4 from Haemophilus influenzae (strain ATCC 51907 / DSM 11121 / KW20 / Rd).